We begin with the raw amino-acid sequence, 466 residues long: Ribulose bisphosphate carboxylase large chain (466 aa).

Lys-5 is subject to N6,N6,N6-trimethyllysine. Substrate-binding residues include Asn-114 and Thr-164. The active-site Proton acceptor is Lys-166. Lys-168 contacts substrate. Positions 192, 194, and 195 each coordinate Mg(2+). An N6-carboxylysine modification is found at Lys-192. His-285 acts as the Proton acceptor in catalysis. Residues Arg-286, His-318, and Ser-370 each coordinate substrate.

This sequence belongs to the RuBisCO large chain family. Type I subfamily. Heterohexadecamer of 8 large chains and 8 small chains; disulfide-linked. The disulfide link is formed within the large subunit homodimers. Mg(2+) is required as a cofactor. Post-translationally, the disulfide bond which can form in the large chain dimeric partners within the hexadecamer appears to be associated with oxidative stress and protein turnover.

The protein localises to the plastid. Its subcellular location is the chloroplast. It carries out the reaction 2 (2R)-3-phosphoglycerate + 2 H(+) = D-ribulose 1,5-bisphosphate + CO2 + H2O. The enzyme catalyses D-ribulose 1,5-bisphosphate + O2 = 2-phosphoglycolate + (2R)-3-phosphoglycerate + 2 H(+). RuBisCO catalyzes two reactions: the carboxylation of D-ribulose 1,5-bisphosphate, the primary event in carbon dioxide fixation, as well as the oxidative fragmentation of the pentose substrate in the photorespiration process. Both reactions occur simultaneously and in competition at the same active site. This Oxalis dillenii (Gray-green wood sorrel) protein is Ribulose bisphosphate carboxylase large chain.